A 73-amino-acid chain; its full sequence is MSKKDVIELEGTIVEALPNAMFKVELENGHTILGHISGKMRMNYIKILPGDGVTVQISPYDLSRGRIVYRKKN.

In terms of domain architecture, S1-like spans 1-72 (MSKKDVIELE…SRGRIVYRKK (72 aa)).

This sequence belongs to the IF-1 family. As to quaternary structure, component of the 30S ribosomal translation pre-initiation complex which assembles on the 30S ribosome in the order IF-2 and IF-3, IF-1 and N-formylmethionyl-tRNA(fMet); mRNA recruitment can occur at any time during PIC assembly.

Its subcellular location is the cytoplasm. In terms of biological role, one of the essential components for the initiation of protein synthesis. Stabilizes the binding of IF-2 and IF-3 on the 30S subunit to which N-formylmethionyl-tRNA(fMet) subsequently binds. Helps modulate mRNA selection, yielding the 30S pre-initiation complex (PIC). Upon addition of the 50S ribosomal subunit IF-1, IF-2 and IF-3 are released leaving the mature 70S translation initiation complex. The polypeptide is Translation initiation factor IF-1 (Fusobacterium nucleatum subsp. nucleatum (strain ATCC 25586 / DSM 15643 / BCRC 10681 / CIP 101130 / JCM 8532 / KCTC 2640 / LMG 13131 / VPI 4355)).